The sequence spans 306 residues: Ornithine carbamoyltransferase (306 aa).

Carbamoyl phosphate is bound by residues 53–56, Q80, R104, and 131–134; these read STRT and HPCQ. Residues N162, D220, and 224-225 each bind L-ornithine; that span reads SM. Carbamoyl phosphate-binding positions include 260 to 261 and R288; that span reads CL.

Belongs to the aspartate/ornithine carbamoyltransferase superfamily. OTCase family.

The protein localises to the cytoplasm. It carries out the reaction carbamoyl phosphate + L-ornithine = L-citrulline + phosphate + H(+). It functions in the pathway amino-acid biosynthesis; L-arginine biosynthesis; L-arginine from L-ornithine and carbamoyl phosphate: step 1/3. Reversibly catalyzes the transfer of the carbamoyl group from carbamoyl phosphate (CP) to the N(epsilon) atom of ornithine (ORN) to produce L-citrulline. The polypeptide is Ornithine carbamoyltransferase (Dechloromonas aromatica (strain RCB)).